A 949-amino-acid polypeptide reads, in one-letter code: Isoleucine--tRNA ligase (949 aa).

The short motif at 58–68 (PYANGDIHIGH) is the 'HIGH' region element. E567 provides a ligand contact to L-isoleucyl-5'-AMP. Positions 608 to 612 (KMSKS) match the 'KMSKS' region motif. Residue K611 coordinates ATP. C912, C915, C932, and C935 together coordinate Zn(2+).

The protein belongs to the class-I aminoacyl-tRNA synthetase family. IleS type 1 subfamily. Monomer. The cofactor is Zn(2+).

It localises to the cytoplasm. It catalyses the reaction tRNA(Ile) + L-isoleucine + ATP = L-isoleucyl-tRNA(Ile) + AMP + diphosphate. In terms of biological role, catalyzes the attachment of isoleucine to tRNA(Ile). As IleRS can inadvertently accommodate and process structurally similar amino acids such as valine, to avoid such errors it has two additional distinct tRNA(Ile)-dependent editing activities. One activity is designated as 'pretransfer' editing and involves the hydrolysis of activated Val-AMP. The other activity is designated 'posttransfer' editing and involves deacylation of mischarged Val-tRNA(Ile). In Vibrio cholerae serotype O1 (strain ATCC 39315 / El Tor Inaba N16961), this protein is Isoleucine--tRNA ligase.